Reading from the N-terminus, the 627-residue chain is (-)-alpha-terpineol synthase, chloroplastic (627 aa).

Residues 1 to 52 constitute a chloroplast transit peptide; that stretch reads MDLISVLPSASKSCVCLHKPLSSSTHKLKPFCKTIRILVMPRRWEFARPSMS. 3 residues coordinate Mg(2+): Asp-378, Asp-382, and Asp-530. The DDXXD motif signature appears at 378-382; the sequence is DDMYD.

Belongs to the terpene synthase family. Tpsd subfamily. Requires Mg(2+) as cofactor. It depends on Mn(2+) as a cofactor.

The protein localises to the plastid. Its subcellular location is the chloroplast. The catalysed reaction is (2E)-geranyl diphosphate + H2O = (S)-alpha-terpineol + diphosphate. Its pathway is terpene metabolism; oleoresin biosynthesis. Functionally, involved in defensive oleoresin formation in conifers in response to insect attack or other injury. Involved in monoterpene (C10) olefins biosynthesis. Produces 57.3% alpha-terpineol (15.1% (+)/84.9% (-)), 27.6% limonene (25.2% (+)/74.8% (-)), 8% terpinolene, 4.7% beta-pinene (14.8% (+)/85.2% (-)), 1.3% alpha-pinene (100% (+)) and 1.1% myrcene. In Pinus taeda (Loblolly pine), this protein is (-)-alpha-terpineol synthase, chloroplastic (PT10).